Consider the following 92-residue polypeptide: Small ribosomal subunit protein uS19 (92 aa).

This sequence belongs to the universal ribosomal protein uS19 family.

Its function is as follows. Protein S19 forms a complex with S13 that binds strongly to the 16S ribosomal RNA. The polypeptide is Small ribosomal subunit protein uS19 (Rickettsia bellii (strain OSU 85-389)).